We begin with the raw amino-acid sequence, 276 residues long: Protein canopy homolog 3 (276 aa).

The N-terminal stretch at M1–P26 is a signal peptide. The 223-residue stretch at S47 to P269 folds into the Saposin B-type domain. Disulfide bonds link C49–C206, C52–C194, and C104–C166. N153 carries an N-linked (GlcNAc...) asparagine glycan. A coiled-coil region spans residues N153–D179. Positions I218 to L276 are disordered.

Belongs to the canopy family. In terms of assembly, interacts with HSP90B1; this interaction is disrupted in the presence of ATP. Interacts with TLR1, TLR2, TLR4 and TLR9. Strongest interaction with TLR4.

The protein localises to the endoplasmic reticulum. Its function is as follows. Toll-like receptor (TLR)-specific co-chaperone for HSP90B1. Required for proper TLR folding, except that of TLR3, and hence controls TLR exit from the endoplasmic reticulum. Consequently, required for both innate and adaptive immune responses. The protein is Protein canopy homolog 3 (Cnpy3) of Mus musculus (Mouse).